A 120-amino-acid polypeptide reads, in one-letter code: NAD(P)H-quinone oxidoreductase subunit 3 (120 aa).

Transmembrane regions (helical) follow at residues 10–30, 64–84, and 89–109; these read FLGF…TNLI, MFAL…PWAV, and LGLL…IALA.

Belongs to the complex I subunit 3 family. In terms of assembly, NDH-1 can be composed of about 15 different subunits; different subcomplexes with different compositions have been identified which probably have different functions.

It is found in the cellular thylakoid membrane. It catalyses the reaction a plastoquinone + NADH + (n+1) H(+)(in) = a plastoquinol + NAD(+) + n H(+)(out). The enzyme catalyses a plastoquinone + NADPH + (n+1) H(+)(in) = a plastoquinol + NADP(+) + n H(+)(out). Functionally, NDH-1 shuttles electrons from an unknown electron donor, via FMN and iron-sulfur (Fe-S) centers, to quinones in the respiratory and/or the photosynthetic chain. The immediate electron acceptor for the enzyme in this species is believed to be plastoquinone. Couples the redox reaction to proton translocation, and thus conserves the redox energy in a proton gradient. Cyanobacterial NDH-1 also plays a role in inorganic carbon-concentration. This chain is NAD(P)H-quinone oxidoreductase subunit 3, found in Prochlorococcus marinus (strain MIT 9312).